The sequence spans 478 residues: Zinc metalloproteinase/disintegrin (478 aa).

A signal peptide spans 1–20 (MIEVLLVTICLAAFPYQGSS). The propeptide occupies 21–187 (IILESGNVND…PIKKASQSNL (167 aa)). Intrachain disulfides connect Cys304–Cys384, Cys344–Cys368, and Cys346–Cys351. Position 329 (His329) interacts with Zn(2+). Glu330 is an active-site residue. Residues His333 and His339 each contribute to the Zn(2+) site. A propeptide spanning residues 390 to 405 (LRTDTVSTPVSGNELL) is cleaved from the precursor. The 82-residue stretch at 397–478 (TPVSGNELLE…AGCPRNPFHA (82 aa)) folds into the Disintegrin domain. 6 disulfides stabilise this stretch: Cys411-Cys426, Cys413-Cys421, Cys420-Cys443, Cys434-Cys440, Cys439-Cys464, and Cys452-Cys471. A Cell attachment site motif is present at residues 456–458 (RGD).

This sequence belongs to the venom metalloproteinase (M12B) family. P-II subfamily. P-IIa sub-subfamily. Monomer. Expressed by the venom gland.

Its subcellular location is the secreted. Its function is as follows. Binds alpha-5/beta-1 (ITGAV/ITGB1), alpha-V/beta-3 (ITGAV/ITGB3) and alpha-M/beta-2 (ITGAM/ITGB2) integrins. Is a potent inhibitor of platelet aggregation induced by ADP, collagen, and thrombin. Induces neutrophil chemotaxis and inhibits the chemotaxis of human neutrophils toward fMLP, IL-8, and jarastatin itself. Directly activates an integrin-coupled signaling and modulate the MAPK pathway in different ways, leading the neutrophils to express different functional response. Induces Erk-2 translocation to nucleus and a delay of the spontaneous apoptosis of neutrophils. Increases the IL-8 mRNA levels in neutrophils. When injected simultaneously with melanoma cells in mice, jarastatin, flavoridin (FL) and kistrin (KR) significantly reduce tumor lung colonization. Inhibits mouse melanoma B16F10 cell growth in vitro. When it interacts with melanoma cells, it induces actin cytoskeleton rearrangement, increasing actin polymerization and PTK2/FAK1 phosphorylation. Interferes with NF-kappaB translocation in melanoma cells. The chain is Zinc metalloproteinase/disintegrin from Bothrops jararaca (Jararaca).